The sequence spans 530 residues: MGIVEPGCGDMLTGTEPMPSDEGRGPGADQQHRFFYPEPGAQDPTDRRAGSSLGTPYSGGALVPAAPGRFLGSFAYPPRAQVAGFPGPGEFFPPPAGAEGYPPVDGYPAPDPRAGLYPGPREDYALPAGLEVSGKLRVALSNHLLWSKFNQHQTEMIITKQGRRMFPFLSFTVAGLEPTSHYRMFVDVVLVDQHHWRYQSGKWVQCGKAEGSMPGNRLYVHPDSPNTGAHWMRQEVSFGKLKLTNNKGASNNVTQMIVLQSLHKYQPRLHIVEVNDGEPEAACSASNTHVFTFQETQFIAVTAYQNAEITQLKIDNNPFAKGFRENFESMYASVDTSVPSPPGPNCQLLGGDPFSPLLSNQYPVPSRFYPDLPGQPKDMISQPYWLGTPREHSYEAEFRAVSMKPTLLPSAPGPTVPYYRGQDVLAPGAGWPVAPQYPPKMSPAGWFRPMRTLPMDPGLGSSEEQGSSPSLWPEVTSLQPEPSDSGLGEGDTKRRRISPYPSSGDSSSPAGAPSPFDKETEGQFYNYFPN.

The tract at residues 1-55 (MGIVEPGCGDMLTGTEPMPSDEGRGPGADQQHRFFYPEPGAQDPTDRRAGSSLGT) is disordered. Ser52 carries the post-translational modification Phosphoserine. Thr55 carries the phosphothreonine modification. A phosphotyrosine mark is found at Tyr76 and Tyr117. Positions 140-325 (LSNHLLWSKF…NNPFAKGFRE (186 aa)) form a DNA-binding region, T-box. Tyr219 bears the Phosphotyrosine; by ABL1 mark. The residue at position 224 (Ser224) is a Phosphoserine. Phosphotyrosine; by ABL1 is present on Tyr265. Thr302 carries the post-translational modification Phosphothreonine. Position 304 is a phosphotyrosine; by ABL1 (Tyr304). Residue Lys313 forms a Glycyl lysine isopeptide (Lys-Gly) (interchain with G-Cter in ubiquitin) linkage. A disordered region spans residues 444–530 (AGWFRPMRTL…EGQFYNYFPN (87 aa)). The segment covering 462–482 (SEEQGSSPSLWPEVTSLQPEP) has biased composition (polar residues). The span at 498–515 (SPYPSSGDSSSPAGAPSP) shows a compositional bias: low complexity. Ser508 is modified (phosphoserine). Tyr525 is modified (phosphotyrosine; by ITK).

Interacts with RUNX1 and RUNX3. Interacts with ITK. The phosphorylated form (at Tyr-525) interacts with GATA3. Interacts with ABL1. Interacts with RELA. The phosphorylated form (at Thr-302) interacts with NFATC2. Interacts with KDM6B. Interacts with SMARCA4 in a KDM6B-dependent manner. Interacts with CCTN1 and CDK9. Interacts with USP10. Post-translationally, phosphorylations at Ser-52, Tyr-76, Ser-224 and Ser-508 are regulated by mTORC1. Phosphorylation at Tyr-525 is essential for its interaction GATA3. Phosphorylation at Tyr-219, Tyr-265 and Tyr-304 enhances its transcriptional activator activity. Phosphorylation at Thr-302 is required for its interaction with NFATC2. Ubiquitinated at Lys-313, leading to its degradation by the proteasome. Ubiquitination is essential for controlling protein stability, binding to the T-box-binding element of the IFN-gamma promoter, and for interaction with NFATC2 through induction of phosphorylation at Thr-302. Deubiquitinated by USP10 leading to its stabilization. T-cell specific. Expressed in regulatory T (TReg) cells.

It localises to the nucleus. Its function is as follows. Lineage-defining transcription factor which initiates Th1 lineage development from naive Th precursor cells both by activating Th1 genetic programs and by repressing the opposing Th2 and Th17 genetic programs. Activates transcription of a set of genes important for Th1 cell function, including those encoding IFN-gamma and the chemokine receptor CXCR3. Activates IFNG and CXCR3 genes in part by recruiting chromatin remodeling complexes including KDM6B, a SMARCA4-containing SWI/SNF-complex, and an H3K4me2-methyltransferase complex to their promoters and all of these complexes serve to establish a more permissive chromatin state conducive with transcriptional activation. Can activate Th1 genes also via recruitment of Mediator complex and P-TEFb (composed of CDK9 and CCNT1/cyclin-T1) in the form of the super elongation complex (SEC) to super-enhancers and associated genes in activated Th1 cells. Inhibits the Th17 cell lineage commitment by blocking RUNX1-mediated transactivation of Th17 cell-specific transcriptinal regulator RORC. Inhibits the Th2 cell lineage commitment by suppressing the production of Th2 cytokines, such as IL-4, IL-5, and IL- 13, via repression of transcriptional regulators GATA3 and NFATC2. Protects Th1 cells from amplifying aberrant type-I IFN response in an IFN-gamma abundant microenvironment by acting as a repressor of type-I IFN transcription factors and type-I IFN- stimulated genes. Acts as a regulator of antiviral B-cell responses; controls chronic viral infection by promoting the antiviral antibody IgG2a isotype switching and via regulation of a broad antiviral gene expression program. The polypeptide is T-box transcription factor TBX21 (Tbx21) (Mus musculus (Mouse)).